The following is a 425-amino-acid chain: Glutamyl-tRNA reductase (425 aa).

Substrate contacts are provided by residues Thr-49–Arg-52, Ser-107, Glu-112–Gln-114, and Gln-118. The active-site Nucleophile is the Cys-50. Residue Gly-187 to Ile-192 coordinates NADP(+).

The protein belongs to the glutamyl-tRNA reductase family. In terms of assembly, homodimer.

The catalysed reaction is (S)-4-amino-5-oxopentanoate + tRNA(Glu) + NADP(+) = L-glutamyl-tRNA(Glu) + NADPH + H(+). It functions in the pathway porphyrin-containing compound metabolism; protoporphyrin-IX biosynthesis; 5-aminolevulinate from L-glutamyl-tRNA(Glu): step 1/2. In terms of biological role, catalyzes the NADPH-dependent reduction of glutamyl-tRNA(Glu) to glutamate 1-semialdehyde (GSA). This Pseudomonas putida (strain ATCC 47054 / DSM 6125 / CFBP 8728 / NCIMB 11950 / KT2440) protein is Glutamyl-tRNA reductase.